A 305-amino-acid chain; its full sequence is Acetyl-coenzyme A carboxylase carboxyl transferase subunit beta (305 aa).

The region spanning 25–293 (LWVQCPACQQ…LPKVESVASL (269 aa)) is the CoA carboxyltransferase N-terminal domain. 4 residues coordinate Zn(2+): Cys-29, Cys-32, Cys-48, and Cys-51. A C4-type zinc finger spans residues 29–51 (CPACQQMIFARDLEKNQRVCTHC).

This sequence belongs to the AccD/PCCB family. Acetyl-CoA carboxylase is a heterohexamer composed of biotin carboxyl carrier protein (AccB), biotin carboxylase (AccC) and two subunits each of ACCase subunit alpha (AccA) and ACCase subunit beta (AccD). Requires Zn(2+) as cofactor.

The protein localises to the cytoplasm. It catalyses the reaction N(6)-carboxybiotinyl-L-lysyl-[protein] + acetyl-CoA = N(6)-biotinyl-L-lysyl-[protein] + malonyl-CoA. The protein operates within lipid metabolism; malonyl-CoA biosynthesis; malonyl-CoA from acetyl-CoA: step 1/1. Component of the acetyl coenzyme A carboxylase (ACC) complex. Biotin carboxylase (BC) catalyzes the carboxylation of biotin on its carrier protein (BCCP) and then the CO(2) group is transferred by the transcarboxylase to acetyl-CoA to form malonyl-CoA. This Granulibacter bethesdensis (strain ATCC BAA-1260 / CGDNIH1) protein is Acetyl-coenzyme A carboxylase carboxyl transferase subunit beta.